A 100-amino-acid polypeptide reads, in one-letter code: uncharacterized protein (100 aa).

3 helical membrane-spanning segments follow: residues Val-11 to Met-33, Trp-45 to Tyr-64, and Trp-68 to Ile-90.

Its subcellular location is the cell membrane. This is an uncharacterized protein from Bacillus subtilis (strain 168).